We begin with the raw amino-acid sequence, 86 residues long: Mu-theraphotoxin-Hhn1b 3 (86 aa).

Positions 1–21 (MKASMFLALTGLALLFVVCYA) are cleaved as a signal peptide. A propeptide spanning residues 22 to 49 (SESEEKEFSNELLSSVLAVDDNSKGEER) is cleaved from the precursor. 3 cysteine pairs are disulfide-bonded: Cys-51-Cys-66, Cys-58-Cys-73, and Cys-65-Cys-80. Ile-84 is modified (isoleucine amide).

This sequence belongs to the neurotoxin 10 (Hwtx-1) family. 22 (Htx-4) subfamily. As to quaternary structure, monomer. Expressed by the venom gland.

Its subcellular location is the secreted. In terms of biological role, neurotoxin. Selectively blocks neuronal tetrodotoxin-sensitive voltage-gated sodium channels (Nav) with an IC(50) of 44.6 nM. Does not affect tetrodotoxin-resistant voltage-gated sodium channels or calcium channels. The sequence is that of Mu-theraphotoxin-Hhn1b 3 from Cyriopagopus hainanus (Chinese bird spider).